We begin with the raw amino-acid sequence, 346 residues long: UPF0421 protein OB2406 (346 aa).

4 helical membrane passes run 16–36 (IAVLLTAYICEWIGWSPVFAV), 55–75 (LIRFPASAIGAAYAVLFIALF), 102–122 (LLVATITSVAMVDVIHSNYVM), and 128–148 (LFTTTIGLSVSTLVNMFLLPP).

The protein belongs to the UPF0421 family.

It localises to the cell membrane. This chain is UPF0421 protein OB2406, found in Oceanobacillus iheyensis (strain DSM 14371 / CIP 107618 / JCM 11309 / KCTC 3954 / HTE831).